The sequence spans 485 residues: Beta-amyrin 28-monooxygenase CYP716A378 (485 aa).

Residues 3-23 (LFFICGLVLFSTLSLISLFLL) traverse the membrane as a helical; Signal-anchor for type II membrane protein segment. Residues N25 and N386 are each glycosylated (N-linked (GlcNAc...) asparagine). C426 is a binding site for heme.

Belongs to the cytochrome P450 family. Heme serves as cofactor. As to expression, mainly expressed in flowers and flower buds, to a lesser extent in young leaves and, at low levels, in old leaves, stems and roots.

Its subcellular location is the membrane. The enzyme catalyses beta-amyrin + 3 reduced [NADPH--hemoprotein reductase] + 3 O2 = oleanolate + 3 oxidized [NADPH--hemoprotein reductase] + 4 H2O + 4 H(+). It participates in secondary metabolite biosynthesis; terpenoid biosynthesis. Its function is as follows. Component of the oleanane-type triterpene saponins (e.g. saponarioside A and saponarioside B) biosynthetic pathway, leading to the production of natural products with detergent properties used as traditional sources of soap. An oxidoreductase that facilitates the oxidation of the methyl group to a carboxyl group at the C-28 position of beta-amyrin, resulting in the formation of oleanolate. In Saponaria officinalis (Common soapwort), this protein is Beta-amyrin 28-monooxygenase CYP716A378.